The chain runs to 358 residues: Bis(monoacylglycero)phosphate synthase CLN5 (358 aa).

Residues 1-23 (MAQEVDTAQGAEMRRGAGAARGR) lie on the Cytoplasmic side of the membrane. A helical; Signal-anchor for type II membrane protein transmembrane segment spans residues 24–40 (ASWCWALALLWLAVVPG). Residues 41–358 (WSRVSGIPSR…PIRNKTLSGL (318 aa)) are Lumenal-facing. 2 disulfides stabilise this stretch: C70/C159 and C77/C165. Residue H117 is the Proton acceptor of the active site. Residues N130, N143, N178, and N203 are each glycosylated (N-linked (GlcNAc...) asparagine). The Nucleophile; Acyl-thioester intermediate role is filled by C231. N255, N271, and N281 each carry an N-linked (GlcNAc...) asparagine glycan. The tract at residues 304–343 (FLLSLLQIFDAVIVHKQFYLFYNFEYWFLPMKFPFIKITY) is membrane-anchoring. N352 carries an N-linked (GlcNAc...) asparagine glycan.

Belongs to the CLN5 family. Multimer. Interacts with SORT1, RAB5A and RAB7A. Interacts with PPT1, TPP1, CLN3, CLN6, CLN8, ATP5F1A and ATP5F1B. In terms of processing, N-glycosylated with both high mannose and complex type sugars. Glycosylation is important for proper folding and trafficking to the lysosomes. Post-translationally, the type II membrane signal anchor is proteolytically cleaved to produce a mature form that is transported to the lysosomes (Bis(monoacylglycero)phosphate synthase CLN5, secreted form). Can undergo proteolytic cleavage at the C-terminus, probably by a cysteine protease and may involve the removal of approximately 10-15 residues from the C-terminal end. As to expression, ubiquitous.

It is found in the lysosome. The protein resides in the membrane. It carries out the reaction S-hexadecanoyl-L-cysteinyl-[protein] + H2O = L-cysteinyl-[protein] + hexadecanoate + H(+). The catalysed reaction is 2 1-acyl-sn-glycero-3-phospho-(1'-sn-glycerol) = 1-acyl-sn-glycero-3-phospho-(3'-acyl-sn-1'-glycerol) + sn-glycero-3-phospho-(1'-sn-glycerol). The enzyme catalyses 2 1-(9Z-octadecenoyl)-sn-glycero-3-phospho-(1'-sn-glycerol) = 1-(9Z-octadecenoyl)-sn-glycero-3-phospho-(3'-(9Z-octadecenoyl)-1'-sn-glycerol) + sn-glycero-3-phospho-(1'-sn-glycerol). It catalyses the reaction 2 1-octadecanoyl-sn-glycero-3-phospho-(1'-sn-glycerol) = 1-octadecanoyl-sn-glycero-3-phospho-(3'-octadecanoyl-1'-sn-glycerol) + sn-glycero-3-phospho-(1'-sn-glycerol). It carries out the reaction 2 1-hexadecanoyl-sn-glycero-3-phospho-(1'-sn-glycerol) = 1-hexadecanoyl-sn-glycero-3-phospho-(3'-hexadecanoyl-1'-sn-glycerol) + sn-glycero-3-phospho-(1'-sn-glycerol). The catalysed reaction is 2 1-tetradecanoyl-sn-glycero-3-phospho-(1'-sn-glycerol) = 1-tetradecanoyl-sn-glycero-3-phospho-(3'-tetradecanoyl-1'-sn-glycerol) + sn-glycero-3-phospho-(1'-sn-glycerol). Anionic phospholipids activate bis(monoacylglycero)phosphate (BMP) synthase activity. Amiodarone, a cationic amphiphilic drug inhibits BMP synthase activity towards liposomal lysophosphatidylglycerol. Palmostatin B inhibits palmitoyl protein thioesterase activity. In terms of biological role, catalyzes the synthesis of bis(monoacylglycero)phosphate (BMP) via transacylation of 2 molecules of lysophosphatidylglycerol (LPG). BMP also known as lysobisphosphatidic acid plays a key role in the formation of intraluminal vesicles and in maintaining intracellular cholesterol homeostasis. Can use only LPG as the exclusive lysophospholipid acyl donor for base exchange and displays BMP synthase activity towards various LPGs (LPG 14:0, LPG 16:0, LPG 18:0, LPG 18:1) with a higher preference for longer chain lengths. Plays a role in influencing the retrograde trafficking of lysosomal sorting receptors SORT1 and IGF2R from the endosomes to the trans-Golgi network by controlling the recruitment of retromer complex to the endosomal membrane. Regulates the localization and activation of RAB7A which is required to recruit the retromer complex to the endosomal membrane. Its function is as follows. Exhibits palmitoyl protein thioesterase (S-depalmitoylation) activity in vitro and most likely plays a role in protein S-depalmitoylation. This Homo sapiens (Human) protein is Bis(monoacylglycero)phosphate synthase CLN5 (CLN5).